We begin with the raw amino-acid sequence, 341 residues long: L-threonine 3-dehydrogenase (341 aa).

Cysteine 38 is a binding site for Zn(2+). Residues threonine 40 and histidine 43 each act as charge relay system in the active site. The Zn(2+) site is built by histidine 63, glutamate 64, cysteine 93, cysteine 96, cysteine 99, and cysteine 107. NAD(+) contacts are provided by residues isoleucine 175, aspartate 195, arginine 200, 262–264 (LGI), and 286–287 (IY).

The protein belongs to the zinc-containing alcohol dehydrogenase family. Homotetramer. Zn(2+) is required as a cofactor.

The protein resides in the cytoplasm. The catalysed reaction is L-threonine + NAD(+) = (2S)-2-amino-3-oxobutanoate + NADH + H(+). It participates in amino-acid degradation; L-threonine degradation via oxydo-reductase pathway; glycine from L-threonine: step 1/2. In terms of biological role, catalyzes the NAD(+)-dependent oxidation of L-threonine to 2-amino-3-ketobutyrate. In Escherichia coli O139:H28 (strain E24377A / ETEC), this protein is L-threonine 3-dehydrogenase.